We begin with the raw amino-acid sequence, 436 residues long: APO protein 1, chloroplastic (436 aa).

Residues 1 to 47 constitute a chloroplast transit peptide; that stretch reads MLLVSPACRGVYLQTIDPKPIDFSARASYALCFQIPTSIPKRECLMR. APO domains are found at residues 155–240 and 329–414; these read ACSE…EIPE and ACGY…RVPQ.

It belongs to the APO family. Expressed at low level. Expressed at higher level in leaves. Expressed at lower level in roots, stems, siliques and flowers.

The protein localises to the plastid. It localises to the chloroplast. Its function is as follows. Involved in the stable assembly of several 4Fe-4S cluster-containing complexes of chloroplasts. May participate in 4Fe-4S cofactor incorporation into psaA and/or psaB during translation. The protein is APO protein 1, chloroplastic (APO1) of Arabidopsis thaliana (Mouse-ear cress).